We begin with the raw amino-acid sequence, 132 residues long: Fatty acid-binding protein 2 (132 aa).

Position 2 is an N-acetylserine (Ser-2). Hexadecanoate is bound by residues Gln-40 and 128–130 (RYY).

This sequence belongs to the calycin superfamily. Fatty-acid binding protein (FABP) family. In terms of assembly, monomer. In terms of tissue distribution, midgut.

It localises to the cytoplasm. Functionally, binds fatty acids in a 1:1 molar ratio. The polypeptide is Fatty acid-binding protein 2 (MFB2) (Manduca sexta (Tobacco hawkmoth)).